The primary structure comprises 142 residues: Large ribosomal subunit protein uL23 (142 aa).

This sequence belongs to the universal ribosomal protein uL23 family.

This Kluyveromyces lactis (strain ATCC 8585 / CBS 2359 / DSM 70799 / NBRC 1267 / NRRL Y-1140 / WM37) (Yeast) protein is Large ribosomal subunit protein uL23 (RPL25).